The following is a 471-amino-acid chain: 3-isopropylmalate dehydratase large subunit (471 aa).

Residues Cys-347, Cys-407, and Cys-410 each contribute to the [4Fe-4S] cluster site.

Belongs to the aconitase/IPM isomerase family. LeuC type 1 subfamily. In terms of assembly, heterodimer of LeuC and LeuD. The cofactor is [4Fe-4S] cluster.

The enzyme catalyses (2R,3S)-3-isopropylmalate = (2S)-2-isopropylmalate. It participates in amino-acid biosynthesis; L-leucine biosynthesis; L-leucine from 3-methyl-2-oxobutanoate: step 2/4. Functionally, catalyzes the isomerization between 2-isopropylmalate and 3-isopropylmalate, via the formation of 2-isopropylmaleate. This is 3-isopropylmalate dehydratase large subunit from Granulibacter bethesdensis (strain ATCC BAA-1260 / CGDNIH1).